The chain runs to 341 residues: Uroporphyrinogen decarboxylase (341 aa).

Residues 25–29 (RQAGR), Phe-44, Asp-74, Tyr-151, Ser-206, and His-318 contribute to the substrate site.

This sequence belongs to the uroporphyrinogen decarboxylase family. Homodimer.

It is found in the cytoplasm. It carries out the reaction uroporphyrinogen III + 4 H(+) = coproporphyrinogen III + 4 CO2. Its pathway is porphyrin-containing compound metabolism; protoporphyrin-IX biosynthesis; coproporphyrinogen-III from 5-aminolevulinate: step 4/4. Its function is as follows. Catalyzes the decarboxylation of four acetate groups of uroporphyrinogen-III to yield coproporphyrinogen-III. This Flavobacterium johnsoniae (strain ATCC 17061 / DSM 2064 / JCM 8514 / BCRC 14874 / CCUG 350202 / NBRC 14942 / NCIMB 11054 / UW101) (Cytophaga johnsonae) protein is Uroporphyrinogen decarboxylase.